The chain runs to 209 residues: Thymidine kinase (209 aa).

ATP-binding positions include 9–16 (SAMNAGKT) and 88–91 (DEAQ). The active-site Proton acceptor is Glu89.

It belongs to the thymidine kinase family. As to quaternary structure, homotetramer.

It is found in the cytoplasm. It carries out the reaction thymidine + ATP = dTMP + ADP + H(+). This chain is Thymidine kinase, found in Xanthomonas campestris pv. campestris (strain 8004).